A 302-amino-acid polypeptide reads, in one-letter code: Sulfate adenylyltransferase subunit 2 (302 aa).

It belongs to the PAPS reductase family. CysD subfamily. As to quaternary structure, heterodimer composed of CysD, the smaller subunit, and CysN.

It catalyses the reaction sulfate + ATP + H(+) = adenosine 5'-phosphosulfate + diphosphate. It functions in the pathway sulfur metabolism; hydrogen sulfide biosynthesis; sulfite from sulfate: step 1/3. In terms of biological role, with CysN forms the ATP sulfurylase (ATPS) that catalyzes the adenylation of sulfate producing adenosine 5'-phosphosulfate (APS) and diphosphate, the first enzymatic step in sulfur assimilation pathway. APS synthesis involves the formation of a high-energy phosphoric-sulfuric acid anhydride bond driven by GTP hydrolysis by CysN coupled to ATP hydrolysis by CysD. The polypeptide is Sulfate adenylyltransferase subunit 2 (Salmonella paratyphi A (strain AKU_12601)).